The following is a 278-amino-acid chain: Diaminopimelate epimerase (278 aa).

The substrate site is built by asparagine 13 and asparagine 66. Cysteine 75 functions as the Proton donor in the catalytic mechanism. Substrate-binding positions include 76–77, asparagine 162, asparagine 195, and 213–214; these read GN and ER. Cysteine 222 (proton acceptor) is an active-site residue. Substrate is bound at residue 223–224; sequence GT.

This sequence belongs to the diaminopimelate epimerase family. In terms of assembly, homodimer.

Its subcellular location is the cytoplasm. The enzyme catalyses (2S,6S)-2,6-diaminopimelate = meso-2,6-diaminopimelate. It participates in amino-acid biosynthesis; L-lysine biosynthesis via DAP pathway; DL-2,6-diaminopimelate from LL-2,6-diaminopimelate: step 1/1. Its function is as follows. Catalyzes the stereoinversion of LL-2,6-diaminopimelate (L,L-DAP) to meso-diaminopimelate (meso-DAP), a precursor of L-lysine and an essential component of the bacterial peptidoglycan. The polypeptide is Diaminopimelate epimerase (Trichodesmium erythraeum (strain IMS101)).